Here is a 373-residue protein sequence, read N- to C-terminus: Zinc finger protein CONSTANS (373 aa).

Residues 15 to 57 (NRARPCDTCRSNACTVYCHADSAYLCMSCDAQVHSANRVASRH) form a B box-type 1; atypical zinc finger. 8 residues coordinate Zn(2+): C20, C23, C43, H48, C63, C66, C86, and H91. The B box-type 2; atypical zinc-finger motif lies at 58-108 (KRVRVCESCERAPAAFLCEADDASLCTACDSEVHSANPLARRHQRVPILPI). Residues 109–120 (SGNSFSSMTTTH) are compositionally biased toward polar residues. The disordered stretch occupies residues 109–130 (SGNSFSSMTTTHHQSEKTMTDP). Residues 121 to 130 (HQSEKTMTDP) are compositionally biased toward basic and acidic residues. In terms of domain architecture, CCT spans 306-348 (REARVLRYREKRKTRKFEKTIRYASRKAYAEIRPRVNGRFAKR).

It belongs to the CONSTANS family. As to quaternary structure, interacts with ADO3, SPA1, SPA2, SPA3 and SPA4. Interacts with MRG1 and MRG2 (via MRG domain). Interacts (via B-box) with MIP1A. Interacts with AS1 to form a functional complex regulating FT expression. Interacts with NFYC9. Component of a red light-dependent nuclear complex made of PHL, PHYB and CO. Interacts directly with PHL in the presence of PHYB. Expressed in leaves, shoots and shoot apical meristem. Detected in the vascular tissue of the hypocotyl, the cotyledons and the leaves. Restricted to the protoxylem and phloem in young inflorescence stems and to the phloem only in older inflorescences. Also detected in the vascular tissue of the root.

It is found in the nucleus. In terms of biological role, transcription factor that acts in the long day flowering pathway and may mediate between the circadian clock and the control of flowering. Plays a role in the regulation of flowering time by acting on 'SUPPRESSOR OF OVEREXPRESSION OF CO1', 'TERMINAL FLOWER 1' and 'FLOWERING LOCUS T'. Also regulates P5CS2 and ACS10 (involved in proline and ethylene biosynthesis, respectively). Regulates the expression of NAKR1 by binding to the 5'-TGTG(N2-3)ATG-3' motif. The sequence is that of Zinc finger protein CONSTANS from Arabidopsis thaliana (Mouse-ear cress).